Reading from the N-terminus, the 601-residue chain is A-type ATP synthase subunit A (601 aa).

235 to 242 (GGFGTGKT) lines the ATP pocket.

This sequence belongs to the ATPase alpha/beta chains family. In terms of assembly, has multiple subunits with at least A(3), B(3), C, D, E, F, H, I and proteolipid K(x).

It is found in the cell membrane. It carries out the reaction ATP + H2O + 4 H(+)(in) = ADP + phosphate + 5 H(+)(out). Component of the A-type ATP synthase that produces ATP from ADP in the presence of a proton gradient across the membrane. The A chain is the catalytic subunit. The polypeptide is A-type ATP synthase subunit A (Thermofilum pendens (strain DSM 2475 / Hrk 5)).